The sequence spans 231 residues: Enolase-phosphatase E1 (231 aa).

It belongs to the HAD-like hydrolase superfamily. MasA/MtnC family. In terms of assembly, monomer. The cofactor is Mg(2+).

The catalysed reaction is 5-methylsulfanyl-2,3-dioxopentyl phosphate + H2O = 1,2-dihydroxy-5-(methylsulfanyl)pent-1-en-3-one + phosphate. Its pathway is amino-acid biosynthesis; L-methionine biosynthesis via salvage pathway; L-methionine from S-methyl-5-thio-alpha-D-ribose 1-phosphate: step 3/6. It participates in amino-acid biosynthesis; L-methionine biosynthesis via salvage pathway; L-methionine from S-methyl-5-thio-alpha-D-ribose 1-phosphate: step 4/6. In terms of biological role, bifunctional enzyme that catalyzes the enolization of 2,3-diketo-5-methylthiopentyl-1-phosphate (DK-MTP-1-P) into the intermediate 2-hydroxy-3-keto-5-methylthiopentenyl-1-phosphate (HK-MTPenyl-1-P), which is then dephosphorylated to form the acireductone 1,2-dihydroxy-3-keto-5-methylthiopentene (DHK-MTPene). This Stenotrophomonas maltophilia (strain R551-3) protein is Enolase-phosphatase E1.